The chain runs to 375 residues: MTLQATPLNAIHRALGARMVDFGGWDMPVNYGSQIEEHNAVRTDAGMFDVSHMCVVDLAGANTRSFLRGLLANNVDKLQTPGKALYSCMLDEKGGVIDDLIVYFFAEDRFRLVVNASTALGDIEWIRARNAATGSDVTITPRREDVAPAGVQPLAIVAVQGPNARTKVWSTFPSTQPSDTLKPFNAAVVQDPALGEIMVARTGYTGEDGFELVVPAENVAAIWEKLNAAGVRPAGLGARDTLRLEAGMNLYGQDMDINTSPLDAGLAWTVDLQSERDFTGKAALAAAGSRQQFLGLILRDKGGVLRAHQKVITPAGDGEITSGTFSPSLSQSIAFARLPKDVAVGDTVQVEIRDRKLNATVVKLPFVRNGKALVS.

This sequence belongs to the GcvT family. In terms of assembly, the glycine cleavage system is composed of four proteins: P, T, L and H.

The catalysed reaction is N(6)-[(R)-S(8)-aminomethyldihydrolipoyl]-L-lysyl-[protein] + (6S)-5,6,7,8-tetrahydrofolate = N(6)-[(R)-dihydrolipoyl]-L-lysyl-[protein] + (6R)-5,10-methylene-5,6,7,8-tetrahydrofolate + NH4(+). In terms of biological role, the glycine cleavage system catalyzes the degradation of glycine. This Cupriavidus necator (strain ATCC 17699 / DSM 428 / KCTC 22496 / NCIMB 10442 / H16 / Stanier 337) (Ralstonia eutropha) protein is Aminomethyltransferase.